Reading from the N-terminus, the 50-residue chain is MEHTTQCKSKQGKPCDCQSKCGCQDCKESCGCKSSAVDNCKCSSCKCASK.

Residues Cys-7, Cys-15, Cys-17, Cys-21, Cys-23, Cys-26, Cys-30, Cys-32, Cys-40, Cys-42, Cys-45, and Cys-47 each contribute to the Zn(2+) site.

This sequence belongs to the metallothionein superfamily.

Its subcellular location is the cytoplasm. The protein resides in the nucleus. Its function is as follows. Metallothionein involved in tolerance to zinc and cadmium. Binds four zinc ions. The sequence is that of Metallothionein zym1 (zym1) from Schizosaccharomyces pombe (strain 972 / ATCC 24843) (Fission yeast).